The chain runs to 446 residues: Oxysterols receptor LXR-beta (446 aa).

The segment covering 1–28 (MSSPTSSLDTPLPGNGSPQPSTSSTSPT) has biased composition (low complexity). Residues 1 to 69 (MSSPTSSLDT…PERKRKKGPA (69 aa)) form a disordered region. The interval 1-76 (MSSPTSSLDT…GPAPKMLGHE (76 aa)) is transactivation AF-1; required for ligand-independent transactivation function. The nuclear receptor DNA-binding region spans 75–152 (HELCRVCGDK…AGMREQCVLS (78 aa)). 2 NR C4-type zinc fingers span residues 78-98 (CRVC…CEGC) and 116-140 (CRGS…LRKC). The segment at 160–201 (KIQKQQQQQPPPPTEPASGSSARPAASPGTSEASSQGSGEGE) is disordered. Positions 175-196 (PASGSSARPAASPGTSEASSQG) are enriched in low complexity. A transactivation AF-2; required for ligand-dependent transactivation function; mediates interaction with CCAR2 region spans residues 205–446 (LTAAQELMIQ…LLSEIWDVHE (242 aa)). Positions 208-446 (AQELMIQQLV…LLSEIWDVHE (239 aa)) constitute an NR LBD domain. Residues K395 and K433 each participate in a glycyl lysine isopeptide (Lys-Gly) (interchain with G-Cter in SUMO2) cross-link.

It belongs to the nuclear hormone receptor family. NR1 subfamily. Forms a heterodimer with RXR. Interacts with CCAR2 (via N-terminus) in a ligand-independent manner. Interacts (when sumoylated) with GPS2; interaction with GPS2 onto hepatic acute phase protein promoters prevents N-Cor corepressor complex dissociation. Interacts with ABCA12 and ABCA1; this interaction is required for ABCA1 localization to the cell surface and is necessary for its normal activity and stability. Sumoylated by SUMO2 at Lys-395 and Lys-433 during the hepatic acute phase response, leading to promote interaction with GPS2 and prevent N-Cor corepressor complex dissociation.

It is found in the nucleus. Its function is as follows. Nuclear receptor that exhibits a ligand-dependent transcriptional activation activity. Binds preferentially to double-stranded oligonucleotide direct repeats having the consensus half-site sequence 5'-AGGTCA-3' and 4-nt spacing (DR-4). Regulates cholesterol uptake through MYLIP-dependent ubiquitination of LDLR, VLDLR and LRP8; DLDLR and LRP8. Interplays functionally with RORA for the regulation of genes involved in liver metabolism. Induces LPCAT3-dependent phospholipid remodeling in endoplasmic reticulum (ER) membranes of hepatocytes, driving SREBF1 processing and lipogenesis. Via LPCAT3, triggers the incorporation of arachidonate into phosphatidylcholines of ER membranes, increasing membrane dynamics and enabling triacylglycerols transfer to nascent very low-density lipoprotein (VLDL) particles. Via LPCAT3 also counteracts lipid-induced ER stress response and inflammation, likely by modulating SRC kinase membrane compartmentalization and limiting the synthesis of lipid inflammatory mediators. Plays an anti-inflammatory role during the hepatic acute phase response by acting as a corepressor: inhibits the hepatic acute phase response by preventing dissociation of the N-Cor corepressor complex. The chain is Oxysterols receptor LXR-beta (Nr1h2) from Rattus norvegicus (Rat).